Reading from the N-terminus, the 167-residue chain is Claudin domain-containing protein 2 (167 aa).

4 helical membrane passes run 13-32 (LLNLLSSILTVLSTTTNYWT), 61-81 (VSAACMVLAATFSIVALGIGI), 96-116 (TIVLLFLSGLLLLIALAVYTS), and 130-150 (YFFGWLALPFLFIAGFCFLLA).

Belongs to the PMP-22/EMP/MP20 family.

The protein resides in the membrane. The chain is Claudin domain-containing protein 2 (Cldnd2) from Mus musculus (Mouse).